Consider the following 432-residue polypeptide: Enolase (432 aa).

(2R)-2-phosphoglycerate is bound at residue glutamine 167. The active-site Proton donor is glutamate 209. Mg(2+) is bound by residues aspartate 246, glutamate 291, and aspartate 318. (2R)-2-phosphoglycerate contacts are provided by lysine 343, arginine 372, serine 373, and lysine 394. Lysine 343 serves as the catalytic Proton acceptor.

Belongs to the enolase family. As to quaternary structure, component of the RNA degradosome, a multiprotein complex involved in RNA processing and mRNA degradation. Requires Mg(2+) as cofactor.

It is found in the cytoplasm. It localises to the secreted. The protein resides in the cell surface. It catalyses the reaction (2R)-2-phosphoglycerate = phosphoenolpyruvate + H2O. It participates in carbohydrate degradation; glycolysis; pyruvate from D-glyceraldehyde 3-phosphate: step 4/5. Its function is as follows. Catalyzes the reversible conversion of 2-phosphoglycerate (2-PG) into phosphoenolpyruvate (PEP). It is essential for the degradation of carbohydrates via glycolysis. The chain is Enolase from Aliivibrio fischeri (strain MJ11) (Vibrio fischeri).